A 213-amino-acid chain; its full sequence is Nicotinate-nucleotide adenylyltransferase (213 aa).

The protein belongs to the NadD family.

The enzyme catalyses nicotinate beta-D-ribonucleotide + ATP + H(+) = deamido-NAD(+) + diphosphate. Its pathway is cofactor biosynthesis; NAD(+) biosynthesis; deamido-NAD(+) from nicotinate D-ribonucleotide: step 1/1. In terms of biological role, catalyzes the reversible adenylation of nicotinate mononucleotide (NaMN) to nicotinic acid adenine dinucleotide (NaAD). The sequence is that of Nicotinate-nucleotide adenylyltransferase from Salmonella typhi.